The primary structure comprises 305 residues: Ribosomal RNA small subunit methyltransferase H (305 aa).

Residues 49 to 51 (GGH), Asp-68, Phe-100, Asp-116, and Gln-123 contribute to the S-adenosyl-L-methionine site.

This sequence belongs to the methyltransferase superfamily. RsmH family.

Its subcellular location is the cytoplasm. It catalyses the reaction cytidine(1402) in 16S rRNA + S-adenosyl-L-methionine = N(4)-methylcytidine(1402) in 16S rRNA + S-adenosyl-L-homocysteine + H(+). Functionally, specifically methylates the N4 position of cytidine in position 1402 (C1402) of 16S rRNA. This Synechocystis sp. (strain ATCC 27184 / PCC 6803 / Kazusa) protein is Ribosomal RNA small subunit methyltransferase H.